Here is a 184-residue protein sequence, read N- to C-terminus: MEEYKALLDEKMGRVVLSLESEYKSLRTGRVNSALFDKVFVDYYGEKTPLTRVANISVPEARLIVIQPWDRSLLSKIEQAILNSDLSMNPSSDGSVLRIKVPVLTIERRKEIVKQAKKIAEDHKIATRNIRHELNNKAKKQEKDSQITEDDLRRILDDIQRDTNFYIKKIDGIFDLKAKEIMEV.

Belongs to the RRF family.

It localises to the cytoplasm. Its function is as follows. Responsible for the release of ribosomes from messenger RNA at the termination of protein biosynthesis. May increase the efficiency of translation by recycling ribosomes from one round of translation to another. This chain is Ribosome-recycling factor, found in Borrelia recurrentis (strain A1).